A 197-amino-acid polypeptide reads, in one-letter code: C4-dicarboxylate transport transcriptional regulatory protein DctR (197 aa).

The Response regulatory domain occupies 4 to 120 (TVHIVDDEES…HIVDIALSAI (117 aa)). The residue at position 53 (aspartate 53) is a 4-aspartylphosphate. The interval 128–135 (AEAQAREA) is inter-domain linker. An HTH luxR-type domain is found at 136 to 197 (VAARRASLSA…RNIADLARMT (62 aa)). The H-T-H motif DNA-binding region spans 160–179 (NKQIAERLGIAMRTVEVHRS).

Post-translationally, phosphorylated by DctS.

The protein localises to the cytoplasm. Functionally, member of the two-component regulatory system DctS/DctR involved in the transport of C4-dicarboxylates. DctR functions as a transcriptional repressor of genes for C4-dicarboxylate transport. In Rhodobacter capsulatus (Rhodopseudomonas capsulata), this protein is C4-dicarboxylate transport transcriptional regulatory protein DctR (dctR).